The primary structure comprises 142 residues: Deoxyuridine 5'-triphosphate nucleotidohydrolase (142 aa).

It belongs to the dUTPase family. Requires Mg(2+) as cofactor.

The catalysed reaction is dUTP + H2O = dUMP + diphosphate + H(+). This enzyme is involved in nucleotide metabolism: it produces dUMP, the immediate precursor of thymidine nucleotides and it decreases the intracellular concentration of dUTP so that uracil cannot be incorporated into DNA. This Swinepox virus (strain Kasza) (SWPV) protein is Deoxyuridine 5'-triphosphate nucleotidohydrolase (DUT).